The sequence spans 194 residues: dTTP/UTP pyrophosphatase (194 aa).

Aspartate 73 serves as the catalytic Proton acceptor.

The protein belongs to the Maf family. YhdE subfamily. Requires a divalent metal cation as cofactor.

The protein localises to the cytoplasm. The enzyme catalyses dTTP + H2O = dTMP + diphosphate + H(+). The catalysed reaction is UTP + H2O = UMP + diphosphate + H(+). Nucleoside triphosphate pyrophosphatase that hydrolyzes dTTP and UTP. May have a dual role in cell division arrest and in preventing the incorporation of modified nucleotides into cellular nucleic acids. The sequence is that of dTTP/UTP pyrophosphatase from Clostridium botulinum (strain 657 / Type Ba4).